A 451-amino-acid polypeptide reads, in one-letter code: Medium-chain fatty acid ethyl ester synthase/esterase 2 (451 aa).

Residue lysine 114 forms a Glycyl lysine isopeptide (Lys-Gly) (interchain with G-Cter in ubiquitin) linkage. Residues 166–430 enclose the AB hydrolase-1 domain; sequence PLVVILHGLA…GGHLAYLDKD (265 aa). Catalysis depends on charge relay system residues serine 247, aspartate 395, and histidine 423.

This sequence belongs to the AB hydrolase superfamily. AB hydrolase 4 family.

It catalyses the reaction an aliphatic alcohol + acetyl-CoA = an acetyl ester + CoA. In terms of biological role, displays enzymatic activity both for medium-chain fatty acid (MCFA) ethyl ester synthesis and hydrolysis (esterase activity). MCFA are toxic for yeast and this enzyme could thus be involved in their detoxification by esterification. In Saccharomyces cerevisiae (strain ATCC 204508 / S288c) (Baker's yeast), this protein is Medium-chain fatty acid ethyl ester synthase/esterase 2 (EHT1).